The primary structure comprises 217 residues: MPLHRLHGLYAITDPALTPDEHLLPAAEAALRGGAKLLQYRDKTASPTQREYRAAQLRQLCHQYHALFIVNDDPALAAQVNADGVHIGQSDGGIKAARDQLGGSRIIGVTCHGDLTLAARAAEAGADYLAMGRFFTSHTKPLAPPASLALLRQACQQFHQPVVAIGGVNPDNAPQLINAGAVSVAVIHALFGQTDTDAIEAAARQLSACFQTNRSAP.

Residues 39–43 (QYRDK) and Asn71 contribute to the 4-amino-2-methyl-5-(diphosphooxymethyl)pyrimidine site. Asp72 and Asp91 together coordinate Mg(2+). Thr110 is a 4-amino-2-methyl-5-(diphosphooxymethyl)pyrimidine binding site. Residue 137 to 139 (SHT) coordinates 2-[(2R,5Z)-2-carboxy-4-methylthiazol-5(2H)-ylidene]ethyl phosphate. Lys140 is a binding site for 4-amino-2-methyl-5-(diphosphooxymethyl)pyrimidine. Residue Gly167 coordinates 2-[(2R,5Z)-2-carboxy-4-methylthiazol-5(2H)-ylidene]ethyl phosphate.

Belongs to the thiamine-phosphate synthase family. Mg(2+) serves as cofactor.

The enzyme catalyses 2-[(2R,5Z)-2-carboxy-4-methylthiazol-5(2H)-ylidene]ethyl phosphate + 4-amino-2-methyl-5-(diphosphooxymethyl)pyrimidine + 2 H(+) = thiamine phosphate + CO2 + diphosphate. The catalysed reaction is 2-(2-carboxy-4-methylthiazol-5-yl)ethyl phosphate + 4-amino-2-methyl-5-(diphosphooxymethyl)pyrimidine + 2 H(+) = thiamine phosphate + CO2 + diphosphate. It catalyses the reaction 4-methyl-5-(2-phosphooxyethyl)-thiazole + 4-amino-2-methyl-5-(diphosphooxymethyl)pyrimidine + H(+) = thiamine phosphate + diphosphate. The protein operates within cofactor biosynthesis; thiamine diphosphate biosynthesis; thiamine phosphate from 4-amino-2-methyl-5-diphosphomethylpyrimidine and 4-methyl-5-(2-phosphoethyl)-thiazole: step 1/1. Functionally, condenses 4-methyl-5-(beta-hydroxyethyl)thiazole monophosphate (THZ-P) and 2-methyl-4-amino-5-hydroxymethyl pyrimidine pyrophosphate (HMP-PP) to form thiamine monophosphate (TMP). This Alcanivorax borkumensis (strain ATCC 700651 / DSM 11573 / NCIMB 13689 / SK2) protein is Thiamine-phosphate synthase.